Consider the following 90-residue polypeptide: Probable Fe(2+)-trafficking protein (90 aa).

This sequence belongs to the Fe(2+)-trafficking protein family.

In terms of biological role, could be a mediator in iron transactions between iron acquisition and iron-requiring processes, such as synthesis and/or repair of Fe-S clusters in biosynthetic enzymes. This is Probable Fe(2+)-trafficking protein from Ectopseudomonas mendocina (strain ymp) (Pseudomonas mendocina).